The chain runs to 340 residues: Entry-fusion complex protein OPG094 (340 aa).

The disordered stretch occupies residues 1 to 20 (MGGGVSVELPKRDPPPGVPT). G2 is lipidated: N-myristoyl glycine; by host. The Virion surface portion of the chain corresponds to 2-319 (GGGVSVELPK…VQHNIKHSFD (318 aa)). A helical; Signal-anchor for type II membrane protein membrane pass occupies residues 320–340 (LKLHLISLLSLLVIWILIVAI).

This sequence belongs to the orthopoxvirus OPG086 family. In terms of assembly, interacts with OPG143. Component of the entry fusion complex (EFC) composed of OPG053, OPG076, OPG086, OPG094, OPG095, OPG099, OPG107, OPG143, OPG104, OPG147 and OPG155. Except for OPG095 and OPG053, each of the EFC proteins is required for assembly or stability of the complex. In terms of processing, unglycosylated because produced in viral factories instead of the classic ER -Golgi route.

The protein localises to the virion membrane. In terms of biological role, component of the entry fusion complex (EFC), which consists of 11 proteins. During cell infection, this complex mediates entry of the virion core into the host cytoplasm by a two-step mechanism consisting of lipid mixing of the viral and cellular membranes and subsequent pore formation. In Cynomys gunnisoni (Gunnison's prairie dog), this protein is Entry-fusion complex protein OPG094 (OPG094).